The sequence spans 681 residues: DNA ligase (681 aa).

Residues 35–39, 84–85, and glutamate 121 each bind NAD(+); these read DAEYD and SI. The active-site N6-AMP-lysine intermediate is lysine 123. Residues arginine 144, glutamate 180, lysine 300, and lysine 324 each coordinate NAD(+). 4 residues coordinate Zn(2+): cysteine 418, cysteine 421, cysteine 436, and cysteine 442. The BRCT domain maps to 601–681; the sequence is AADGPASGKT…GLRRLLEQPA (81 aa).

The protein belongs to the NAD-dependent DNA ligase family. LigA subfamily. The cofactor is Mg(2+). Mn(2+) serves as cofactor.

It catalyses the reaction NAD(+) + (deoxyribonucleotide)n-3'-hydroxyl + 5'-phospho-(deoxyribonucleotide)m = (deoxyribonucleotide)n+m + AMP + beta-nicotinamide D-nucleotide.. Functionally, DNA ligase that catalyzes the formation of phosphodiester linkages between 5'-phosphoryl and 3'-hydroxyl groups in double-stranded DNA using NAD as a coenzyme and as the energy source for the reaction. It is essential for DNA replication and repair of damaged DNA. The chain is DNA ligase from Aromatoleum aromaticum (strain DSM 19018 / LMG 30748 / EbN1) (Azoarcus sp. (strain EbN1)).